The following is a 621-amino-acid chain: TOX high mobility group box family member 4 (621 aa).

Disordered stretches follow at residues 153–227 (LGLS…QKPV) and 305–333 (LDPA…ASIE). Thr176 bears the Phosphothreonine mark. 3 positions are modified to phosphoserine: Ser178, Ser181, and Ser182. Basic and acidic residues predominate over residues 183–193 (LHEDGVEDFRR). Positions 208 to 218 (KQKAPKKRKKK) are enriched in basic residues. The short motif at 213-218 (KKRKKK) is the Nuclear localization signal element. Positions 223–291 (PQKPVSAYAL…EYLKALAAYK (69 aa)) form a DNA-binding region, HMG box. Residues 307–319 (PAPPSQTPSPPPM) are compositionally biased toward pro residues. Thr313 carries the phosphothreonine modification. Ser315 is subject to Phosphoserine. A compositionally biased stretch (low complexity) spans 320–333 (ATVDPASPAPASIE). At Arg481 the chain carries Asymmetric dimethylarginine. A disordered region spans residues 510–529 (PTVESSPERPMNNSPEAHTV). Phosphoserine occurs at positions 533, 550, 552, 560, 562, and 567.

In terms of assembly, component of the PNUTS-PP1 phosphatase complex, composed of PPP1R10/PNUTS, TOX4, WDR82 and PPP1CA or PPP1CB or PPP1CC. Interacts with PPP1R10/PNUTS. Interacts with FOXO1 and CREB1 (increased by cAMP); FOXO1 and CREB1 are required for full induction of TOX4-dependent activity and the interactions are inhibited by insulin.

The protein resides in the nucleus. Its subcellular location is the chromosome. In liver, recruited to target gene promoters following treatment with dexamethasone and cAMP. Binding is decreased in presence of insulin. Transcription factor that modulates cell fate reprogramming from the somatic state to the pluripotent and neuronal fate. In liver, controls the expression of hormone-regulated gluconeogenic genes such as G6PC1 and PCK1. This regulation is independent of the insulin receptor activation. Also acts as a regulatory component of protein phosphatase 1 (PP1) complexes. Component of the PNUTS-PP1 protein phosphatase complex, a PP1 complex that regulates RNA polymerase II transcription pause-release. PNUTS-PP1 also plays a role in the control of chromatin structure and cell cycle progression during the transition from mitosis into interphase. The sequence is that of TOX high mobility group box family member 4 (TOX4) from Pongo abelii (Sumatran orangutan).